We begin with the raw amino-acid sequence, 364 residues long: Methylthioribose-1-phosphate isomerase (364 aa).

The active-site Proton donor is the Asp-254.

The protein belongs to the eIF-2B alpha/beta/delta subunits family. MtnA subfamily.

Its subcellular location is the cytoplasm. The protein resides in the nucleus. It carries out the reaction 5-(methylsulfanyl)-alpha-D-ribose 1-phosphate = 5-(methylsulfanyl)-D-ribulose 1-phosphate. It functions in the pathway amino-acid biosynthesis; L-methionine biosynthesis via salvage pathway; L-methionine from S-methyl-5-thio-alpha-D-ribose 1-phosphate: step 1/6. Its function is as follows. Catalyzes the interconversion of methylthioribose-1-phosphate (MTR-1-P) into methylthioribulose-1-phosphate (MTRu-1-P). The protein is Methylthioribose-1-phosphate isomerase of Drosophila simulans (Fruit fly).